Consider the following 306-residue polypeptide: Acetyl-coenzyme A carboxylase carboxyl transferase subunit beta (306 aa).

The 270-residue stretch at 25–294 (LWIKCPETGE…TVVGANDDKT (270 aa)) folds into the CoA carboxyltransferase N-terminal domain.

It belongs to the AccD/PCCB family. In terms of assembly, acetyl-CoA carboxylase is a heterohexamer composed of biotin carboxyl carrier protein (AccB), biotin carboxylase (AccC) and two subunits each of ACCase subunit alpha (AccA) and ACCase subunit beta (AccD).

The protein resides in the cytoplasm. The catalysed reaction is N(6)-carboxybiotinyl-L-lysyl-[protein] + acetyl-CoA = N(6)-biotinyl-L-lysyl-[protein] + malonyl-CoA. Its pathway is lipid metabolism; malonyl-CoA biosynthesis; malonyl-CoA from acetyl-CoA: step 1/1. Its function is as follows. Component of the acetyl coenzyme A carboxylase (ACC) complex. Biotin carboxylase (BC) catalyzes the carboxylation of biotin on its carrier protein (BCCP) and then the CO(2) group is transferred by the transcarboxylase to acetyl-CoA to form malonyl-CoA. The sequence is that of Acetyl-coenzyme A carboxylase carboxyl transferase subunit beta from Allorhizobium ampelinum (strain ATCC BAA-846 / DSM 112012 / S4) (Agrobacterium vitis (strain S4)).